Consider the following 218-residue polypeptide: N-(5'-phosphoribosyl)anthranilate isomerase (218 aa).

The protein belongs to the TrpF family.

The catalysed reaction is N-(5-phospho-beta-D-ribosyl)anthranilate = 1-(2-carboxyphenylamino)-1-deoxy-D-ribulose 5-phosphate. Its pathway is amino-acid biosynthesis; L-tryptophan biosynthesis; L-tryptophan from chorismate: step 3/5. The chain is N-(5'-phosphoribosyl)anthranilate isomerase from Rhodopseudomonas palustris (strain BisA53).